Reading from the N-terminus, the 147-residue chain is MVHFTAEEKAAITSLWSKMNVEEAGGEALGRLLVVYPWTQRFFDNFGNLSSPSAILGNPKVKAHGKKVLTSFGDAIKNMDNLKTTFAKLSELHCDKLHVDPENFRLLGNVMVIILATHFGKEFTPEVQAAWQKLVSAVAIALGHKYH.

The region spanning 3–147 (HFTAEEKAAI…VAIALGHKYH (145 aa)) is the Globin domain. Serine 14 and serine 51 each carry phosphoserine. Heme b contacts are provided by histidine 64 and histidine 93.

Belongs to the globin family. As to quaternary structure, heterotetramer of two alpha chains and two epsilon chains in early embryonic hemoglobin Gower-2; two zeta chains and two epsilon chains in early embryonic hemoglobin Gower-1. Red blood cells.

Its function is as follows. The epsilon chain is a beta-type chain of early mammalian embryonic hemoglobin. This is Hemoglobin subunit epsilon (HBE1) from Saimiri boliviensis boliviensis (Bolivian squirrel monkey).